The sequence spans 599 residues: Sulfite reductase [NADPH] flavoprotein alpha-component (599 aa).

In terms of domain architecture, Flavodoxin-like spans 64-202 (ITIISASQTG…AASEWRARVV (139 aa)). FMN contacts are provided by residues 70–75 (SQTGNA), 117–120 (STQG), and 153–162 (LGDSSYEFFC). Residues 234-448 (DAPLVASLSV…IEHNDNFRLP (215 aa)) enclose the FAD-binding FR-type domain. FAD is bound by residues T322, A356, 386 to 389 (RLYS), 404 to 406 (TVG), Y410, and 419 to 422 (GGAS). NADP(+) is bound by residues 519-520 (SR), 525-529 (KVYVQ), and D561. Y599 lines the FAD pocket.

Belongs to the NADPH-dependent sulphite reductase flavoprotein subunit CysJ family. It in the N-terminal section; belongs to the flavodoxin family. This sequence in the C-terminal section; belongs to the flavoprotein pyridine nucleotide cytochrome reductase family. As to quaternary structure, alpha(8)-beta(8). The alpha component is a flavoprotein, the beta component is a hemoprotein. It depends on FAD as a cofactor. The cofactor is FMN.

It carries out the reaction hydrogen sulfide + 3 NADP(+) + 3 H2O = sulfite + 3 NADPH + 4 H(+). Its pathway is sulfur metabolism; hydrogen sulfide biosynthesis; hydrogen sulfide from sulfite (NADPH route): step 1/1. In terms of biological role, component of the sulfite reductase complex that catalyzes the 6-electron reduction of sulfite to sulfide. This is one of several activities required for the biosynthesis of L-cysteine from sulfate. The flavoprotein component catalyzes the electron flow from NADPH -&gt; FAD -&gt; FMN to the hemoprotein component. This chain is Sulfite reductase [NADPH] flavoprotein alpha-component, found in Shigella flexneri serotype 5b (strain 8401).